We begin with the raw amino-acid sequence, 240 residues long: UDP-2,3-diacylglucosamine hydrolase (240 aa).

Residues D9, H11, D43, N81, and H116 each contribute to the Mn(2+) site. N81–R82 lines the substrate pocket. The substrate site is built by D124, S162, K166, K169, and H197. The Mn(2+) site is built by H197 and H199.

The protein belongs to the LpxH family. The cofactor is Mn(2+).

Its subcellular location is the cell inner membrane. The enzyme catalyses UDP-2-N,3-O-bis[(3R)-3-hydroxytetradecanoyl]-alpha-D-glucosamine + H2O = 2-N,3-O-bis[(3R)-3-hydroxytetradecanoyl]-alpha-D-glucosaminyl 1-phosphate + UMP + 2 H(+). It participates in glycolipid biosynthesis; lipid IV(A) biosynthesis; lipid IV(A) from (3R)-3-hydroxytetradecanoyl-[acyl-carrier-protein] and UDP-N-acetyl-alpha-D-glucosamine: step 4/6. Hydrolyzes the pyrophosphate bond of UDP-2,3-diacylglucosamine to yield 2,3-diacylglucosamine 1-phosphate (lipid X) and UMP by catalyzing the attack of water at the alpha-P atom. Involved in the biosynthesis of lipid A, a phosphorylated glycolipid that anchors the lipopolysaccharide to the outer membrane of the cell. The chain is UDP-2,3-diacylglucosamine hydrolase from Neisseria meningitidis serogroup C / serotype 2a (strain ATCC 700532 / DSM 15464 / FAM18).